The following is an 83-amino-acid chain: Consomatin Rs1 (83 aa).

The signal sequence occupies residues 1 to 22 (MQTAYWVMVMMMVWITAPLSEG). A propeptide spanning residues 23-55 (GKLNNVIRGLVPDDVTPKRISQSLISRRRFDSR) is cleaved from the precursor. An intrachain disulfide couples Cys62 to Cys67. Residue Trp64 is modified to D-tryptophan. At Pro68 the chain carries 4-hydroxyproline. Positions 71-83 (LHGDNYDLKEKDK) are excised as a propeptide.

It belongs to the conotoxin C superfamily. Consomatin family. Expressed by the venom duct.

The protein localises to the secreted. Moderately activates human somatostatin receptors (SSTR) with a preferential activation of SSTR1 and SSTR4. In vivo, does not cause behavioral changes in mice within a few minutes of intracranial injection, but causes a progressive loss of movement thereafter. Four to five hours after injection, mice recover, even with the highest dose tested. Shows antinociception and antihyperalgesia activities in two mouse models of acute pain, most probably by acting outside the central nervous system. In Conus raulsilvai (Sea snail), this protein is Consomatin Rs1.